The chain runs to 621 residues: Chaperone protein HscA homolog (621 aa).

This sequence belongs to the heat shock protein 70 family.

Functionally, chaperone involved in the maturation of iron-sulfur cluster-containing proteins. Has a low intrinsic ATPase activity which is markedly stimulated by HscB. The sequence is that of Chaperone protein HscA homolog from Acidithiobacillus ferrooxidans (strain ATCC 23270 / DSM 14882 / CIP 104768 / NCIMB 8455) (Ferrobacillus ferrooxidans (strain ATCC 23270)).